Consider the following 334-residue polypeptide: Delta(1)-pyrroline-2-carboxylate/Delta(1)-piperideine-2-carboxylate reductase (334 aa).

The Charge relay system role is filled by Ser-44. His-45 acts as the Proton donor in catalysis. Arg-49 contacts substrate. His-117–Leu-121 contributes to the NADP(+) binding site. Substrate is bound at residue Thr-157. Residue Asp-175 to Ala-177 participates in NADP(+) binding. Arg-183–Gly-184 serves as a coordination point for substrate. Residue Glu-185 is the Charge relay system of the active site. NADP(+) is bound by residues His-226–Lys-227 and Arg-301–Arg-307.

Belongs to the LDH2/MDH2 oxidoreductase family. As to quaternary structure, homodimer.

The enzyme catalyses L-pipecolate + NADP(+) = Delta(1)-piperideine-2-carboxylate + NADPH + H(+). It carries out the reaction L-proline + NADP(+) = 1-pyrroline-2-carboxylate + NADPH + H(+). The catalysed reaction is cis-4-hydroxy-L-proline + NADP(+) = Delta(1)-pyrroline-(4S)-hydroxy-2-carboxylate + NADPH + 2 H(+). Its function is as follows. Catalyzes the reduction of both Delta(1)-pyrroline-2-carboxylate (Pyr2C) and Delta(1)-piperideine-2-carboxylate (Pip2C) to L-proline and L-pipecolate, respectively, using NADPH as the electron donor. Cannot use NADH instead of NADPH. Is likely involved in a degradation pathway that converts trans-3-hydroxy-L-proline (t3LHyp) to L-proline, which would allow P.aeruginosa to grow on t3LHyp as a sole carbon source. Can also catalyze the reverse oxidation reactions, albeit at a much lower rate. Is also able to use Delta(1)-pyrroline-(4S)-hydroxy-2-carboxylate (Pyr4SH2C) and cis-4-hydroxy-L-proline (c4LHyp) as substrates, and might be involved in the metabolism of c4LHyp, a compound which is generated by the hydroxylation of free L-proline in bacteria. The protein is Delta(1)-pyrroline-2-carboxylate/Delta(1)-piperideine-2-carboxylate reductase of Pseudomonas aeruginosa (strain ATCC 15692 / DSM 22644 / CIP 104116 / JCM 14847 / LMG 12228 / 1C / PRS 101 / PAO1).